Reading from the N-terminus, the 252-residue chain is Imidazole glycerol phosphate synthase subunit HisF (252 aa).

Residues Asp11 and Asp130 contribute to the active site.

The protein belongs to the HisA/HisF family. As to quaternary structure, heterodimer of HisH and HisF.

Its subcellular location is the cytoplasm. It catalyses the reaction 5-[(5-phospho-1-deoxy-D-ribulos-1-ylimino)methylamino]-1-(5-phospho-beta-D-ribosyl)imidazole-4-carboxamide + L-glutamine = D-erythro-1-(imidazol-4-yl)glycerol 3-phosphate + 5-amino-1-(5-phospho-beta-D-ribosyl)imidazole-4-carboxamide + L-glutamate + H(+). It participates in amino-acid biosynthesis; L-histidine biosynthesis; L-histidine from 5-phospho-alpha-D-ribose 1-diphosphate: step 5/9. Functionally, IGPS catalyzes the conversion of PRFAR and glutamine to IGP, AICAR and glutamate. The HisF subunit catalyzes the cyclization activity that produces IGP and AICAR from PRFAR using the ammonia provided by the HisH subunit. The chain is Imidazole glycerol phosphate synthase subunit HisF from Acinetobacter baumannii (strain AB307-0294).